Consider the following 332-residue polypeptide: uncharacterized protein (332 aa).

An N-terminal signal peptide occupies residues 1 to 23; that stretch reads MKRIPSLIIGLLLILATWHSVLA. The helical transmembrane segment at 231–251 threads the bilayer; sequence SFFLGMIVTLIILAPVILYLW.

The protein resides in the membrane. This is an uncharacterized protein from Pyrococcus horikoshii (strain ATCC 700860 / DSM 12428 / JCM 9974 / NBRC 100139 / OT-3).